The sequence spans 204 residues: Holliday junction branch migration complex subunit RuvA (204 aa).

Positions Met1–Ala64 are domain I. Residues Gln65–Glu143 form a domain II region. Residues Ser144–Ser155 form a flexible linker region. Positions His156–Leu204 are domain III.

The protein belongs to the RuvA family. Homotetramer. Forms an RuvA(8)-RuvB(12)-Holliday junction (HJ) complex. HJ DNA is sandwiched between 2 RuvA tetramers; dsDNA enters through RuvA and exits via RuvB. An RuvB hexamer assembles on each DNA strand where it exits the tetramer. Each RuvB hexamer is contacted by two RuvA subunits (via domain III) on 2 adjacent RuvB subunits; this complex drives branch migration. In the full resolvosome a probable DNA-RuvA(4)-RuvB(12)-RuvC(2) complex forms which resolves the HJ.

It is found in the cytoplasm. Functionally, the RuvA-RuvB-RuvC complex processes Holliday junction (HJ) DNA during genetic recombination and DNA repair, while the RuvA-RuvB complex plays an important role in the rescue of blocked DNA replication forks via replication fork reversal (RFR). RuvA specifically binds to HJ cruciform DNA, conferring on it an open structure. The RuvB hexamer acts as an ATP-dependent pump, pulling dsDNA into and through the RuvAB complex. HJ branch migration allows RuvC to scan DNA until it finds its consensus sequence, where it cleaves and resolves the cruciform DNA. The sequence is that of Holliday junction branch migration complex subunit RuvA from Haemophilus influenzae (strain ATCC 51907 / DSM 11121 / KW20 / Rd).